The sequence spans 238 residues: Purine nucleoside phosphorylase DeoD-type (238 aa).

His-4 is an a purine D-ribonucleoside binding site. Phosphate is bound by residues Gly-20, Arg-24, Arg-43, and 87-90 (RIGS). A purine D-ribonucleoside contacts are provided by residues 181-183 (EME) and 205-206 (SD). The active-site Proton donor is the Asp-206.

Belongs to the PNP/UDP phosphorylase family. As to quaternary structure, homohexamer; trimer of homodimers.

It carries out the reaction a purine D-ribonucleoside + phosphate = a purine nucleobase + alpha-D-ribose 1-phosphate. The enzyme catalyses a purine 2'-deoxy-D-ribonucleoside + phosphate = a purine nucleobase + 2-deoxy-alpha-D-ribose 1-phosphate. Its function is as follows. Catalyzes the reversible phosphorolytic breakdown of the N-glycosidic bond in the beta-(deoxy)ribonucleoside molecules, with the formation of the corresponding free purine bases and pentose-1-phosphate. The sequence is that of Purine nucleoside phosphorylase DeoD-type from Mycoplasma pneumoniae (strain ATCC 29342 / M129 / Subtype 1) (Mycoplasmoides pneumoniae).